The sequence spans 405 residues: 3-hydroxy-3-methylglutaryl-coenzyme A reductase (405 aa).

Active-site charge relay system residues include E101 and D305. H400 functions as the Proton donor in the catalytic mechanism.

It belongs to the HMG-CoA reductase family. Homodimer.

It localises to the cytoplasm. The catalysed reaction is (R)-mevalonate + 2 NADP(+) + CoA = (3S)-3-hydroxy-3-methylglutaryl-CoA + 2 NADPH + 2 H(+). It functions in the pathway metabolic intermediate biosynthesis; (R)-mevalonate biosynthesis; (R)-mevalonate from acetyl-CoA: step 3/3. Is competitively inhibited by lovastatin (formerly called mevinolin). Lovastatin also blocks the growth of H.salinarum, and this effect is reversed by addition of mevalonate, indicating the critical role that the mevalonate pathway plays in isoprenoid biosynthesis by these archaea. Catalyzes the NADPH-dependent reductive deacylation of (S)-3-hydroxy-3-methylglutaryl-CoA (HMG-CoA) to (R)-mevalonate. Cannot use NADH instead of NADPH. Functions in the mevalonate (MVA) pathway leading to isopentenyl diphosphate (IPP), a key precursor for the biosynthesis of isoprenoid compounds such as archaeal membrane lipids. The polypeptide is 3-hydroxy-3-methylglutaryl-coenzyme A reductase (hmgA) (Halobacterium salinarum (strain ATCC 29341 / DSM 671 / R1)).